A 280-amino-acid chain; its full sequence is 4-deoxy-L-threo-5-hexosulose-uronate ketol-isomerase (280 aa).

The Zn(2+) site is built by H198, H200, E205, and H247.

Belongs to the KduI family. Zn(2+) serves as cofactor.

It localises to the cytoplasm. It carries out the reaction 5-dehydro-4-deoxy-D-glucuronate = 3-deoxy-D-glycero-2,5-hexodiulosonate. Its function is as follows. Isomerase involved in ulvan degradation. Ulvan is the main polysaccharide component of the Ulvales (green seaweed) cell wall. It is composed of disaccharide building blocks comprising 3-sulfated rhamnose (Rha3S) linked to D-glucuronic acid (GlcA), L-iduronic acid (IduA), or D-xylose (Xyl). Catalyzes the isomerization of 5-dehydro-4-deoxy-D-glucuronate to 3-deoxy-D-glycero-2,5-hexodiulosonate. The sequence is that of 4-deoxy-L-threo-5-hexosulose-uronate ketol-isomerase from Formosa agariphila (strain DSM 15362 / KCTC 12365 / LMG 23005 / KMM 3901 / M-2Alg 35-1).